Here is a 1203-residue protein sequence, read N- to C-terminus: Partitioning defective 3 homolog B (1203 aa).

2 disordered regions span residues 79–104 (FDEQ…PDAF) and 138–162 (RRSS…SGQS). Phosphoserine is present on Ser100. Over residues 152 to 162 (QPSTASLSGQS) the composition is skewed to polar residues. The region spanning 201–289 (TRAVEISGEG…SPSVILHVLL (89 aa)) is the PDZ 1 domain. Residues 334–374 (TRASSPEGEEPASPQQSKSPRVPRLGRKPSSPSLSPLMGFG) form a disordered region. Ser346, Ser352, and Ser368 each carry phosphoserine. 2 PDZ domains span residues 383–468 (KIDL…VIAR) and 496–585 (TLEI…GMIQ). A phosphoserine mark is found at Ser635, Ser710, Ser728, Ser730, Ser746, Ser749, and Ser801. The span at 718–732 (GKVQSLADRRSDSPG) shows a compositional bias: basic and acidic residues. The interval 718 to 743 (GKVQSLADRRSDSPGKDFGPTLGLKK) is disordered. 3 disordered regions span residues 787–927 (KSYD…EKQA), 968–994 (VFRS…PDHL), and 1050–1203 (RPSD…TAAV). Thr810 is subject to Phosphothreonine. Residues 827–842 (VENKAKNIKKTKEKEK) show a composition bias toward basic and acidic residues. Over residues 843-854 (KKGKGKLKVKEK) the composition is skewed to basic residues. Basic and acidic residues-rich tracts occupy residues 855–865 (KLKEEHEDAER), 881–893 (KKDD…EQKG), 906–927 (ERMK…EKQA), and 984–994 (RDGRPLSPDHL). 2 positions are modified to phosphoserine: Ser1088 and Ser1182.

This sequence belongs to the PAR3 family. As to quaternary structure, interacts with PARD6B. Interacts with INSC/inscuteable.

It is found in the endomembrane system. The protein resides in the cell junction. The protein localises to the tight junction. Its function is as follows. Putative adapter protein involved in asymmetrical cell division and cell polarization processes. May play a role in the formation of epithelial tight junctions. The chain is Partitioning defective 3 homolog B (Pard3b) from Mus musculus (Mouse).